Here is a 115-residue protein sequence, read N- to C-terminus: Holo-[acyl-carrier-protein] synthase (115 aa).

Mg(2+) contacts are provided by aspartate 8 and glutamate 50.

The protein belongs to the P-Pant transferase superfamily. AcpS family. Mg(2+) is required as a cofactor.

The protein localises to the cytoplasm. The enzyme catalyses apo-[ACP] + CoA = holo-[ACP] + adenosine 3',5'-bisphosphate + H(+). Transfers the 4'-phosphopantetheine moiety from coenzyme A to a Ser of acyl-carrier-protein. The polypeptide is Holo-[acyl-carrier-protein] synthase (Cutibacterium acnes (strain DSM 16379 / KPA171202) (Propionibacterium acnes)).